A 164-amino-acid chain; its full sequence is Protein-export protein SecB (164 aa).

It belongs to the SecB family. In terms of assembly, homotetramer, a dimer of dimers. One homotetramer interacts with 1 SecA dimer.

It is found in the cytoplasm. Functionally, one of the proteins required for the normal export of preproteins out of the cell cytoplasm. It is a molecular chaperone that binds to a subset of precursor proteins, maintaining them in a translocation-competent state. It also specifically binds to its receptor SecA. The sequence is that of Protein-export protein SecB from Shewanella denitrificans (strain OS217 / ATCC BAA-1090 / DSM 15013).